The primary structure comprises 410 residues: Acetate kinase (410 aa).

Residue asparagine 7 coordinates Mg(2+). Lysine 14 is an ATP binding site. A substrate-binding site is contributed by arginine 88. The active-site Proton donor/acceptor is aspartate 145. ATP is bound by residues 203 to 207 (HAGNG), 278 to 280 (DTR), and 326 to 330 (GIGEN). A Mg(2+)-binding site is contributed by glutamate 379.

Belongs to the acetokinase family. As to quaternary structure, homodimer. The cofactor is Mg(2+). Requires Mn(2+) as cofactor.

The protein localises to the cytoplasm. The enzyme catalyses acetate + ATP = acetyl phosphate + ADP. It functions in the pathway metabolic intermediate biosynthesis; acetyl-CoA biosynthesis; acetyl-CoA from acetate: step 1/2. Its function is as follows. Catalyzes the formation of acetyl phosphate from acetate and ATP. Can also catalyze the reverse reaction. The sequence is that of Acetate kinase from Onion yellows phytoplasma (strain OY-M).